The sequence spans 347 residues: Histone deacetylase 11 (347 aa).

The segment at 14-326 (TRWPIVYSPR…LNLFGLGLIG (313 aa)) is histone deacetylase. Histidine 143 is a catalytic residue.

It belongs to the histone deacetylase family. In terms of assembly, interacts with HDAC6. In terms of tissue distribution, weakly expressed in most tissues. Strongly expressed in brain, heart, skeletal muscle, kidney and testis.

Its subcellular location is the nucleus. It catalyses the reaction N(6)-acetyl-L-lysyl-[histone] + H2O = L-lysyl-[histone] + acetate. Its function is as follows. Responsible for the deacetylation of lysine residues on the N-terminal part of the core histones (H2A, H2B, H3 and H4). Histone deacetylation gives a tag for epigenetic repression and plays an important role in transcriptional regulation, cell cycle progression and developmental events. Histone deacetylases act via the formation of large multiprotein complexes. This Homo sapiens (Human) protein is Histone deacetylase 11 (HDAC11).